Here is a 366-residue protein sequence, read N- to C-terminus: DNA replication and repair protein RecF (366 aa).

Residue 30–37 (GDNGMGKT) participates in ATP binding.

This sequence belongs to the RecF family.

Its subcellular location is the cytoplasm. Its function is as follows. The RecF protein is involved in DNA metabolism; it is required for DNA replication and normal SOS inducibility. RecF binds preferentially to single-stranded, linear DNA. It also seems to bind ATP. The chain is DNA replication and repair protein RecF from Azobacteroides pseudotrichonymphae genomovar. CFP2.